We begin with the raw amino-acid sequence, 199 residues long: Recombination protein RecR (199 aa).

A C4-type zinc finger spans residues 58 to 73 (CSVCTNLTDRDPCRIC). Residues 81-176 (AVICVVEEPR…KVTRIAHGLP (96 aa)) enclose the Toprim domain.

It belongs to the RecR family.

Its function is as follows. May play a role in DNA repair. It seems to be involved in an RecBC-independent recombinational process of DNA repair. It may act with RecF and RecO. The sequence is that of Recombination protein RecR from Heliobacterium modesticaldum (strain ATCC 51547 / Ice1).